The following is a 472-amino-acid chain: Membrane-bound lytic murein transglycosylase F (472 aa).

A signal peptide spans 1-24 (MRLLVIFLLALLLMACKEAPKPLA). Positions 25–259 (DPRTTKEIIV…HLIDRYYGHA (235 aa)) are non-LT domain. Residues 260 to 472 (DRLKPVDVTT…NGFGNTLSQE (213 aa)) form an LT domain region. Residue glutamate 306 is part of the active site.

The protein in the N-terminal section; belongs to the bacterial solute-binding protein 3 family. This sequence in the C-terminal section; belongs to the transglycosylase Slt family.

Its subcellular location is the cell outer membrane. The catalysed reaction is Exolytic cleavage of the (1-&gt;4)-beta-glycosidic linkage between N-acetylmuramic acid (MurNAc) and N-acetylglucosamine (GlcNAc) residues in peptidoglycan, from either the reducing or the non-reducing ends of the peptidoglycan chains, with concomitant formation of a 1,6-anhydrobond in the MurNAc residue.. Its function is as follows. Murein-degrading enzyme that degrades murein glycan strands and insoluble, high-molecular weight murein sacculi, with the concomitant formation of a 1,6-anhydromuramoyl product. Lytic transglycosylases (LTs) play an integral role in the metabolism of the peptidoglycan (PG) sacculus. Their lytic action creates space within the PG sacculus to allow for its expansion as well as for the insertion of various structures such as secretion systems and flagella. This is Membrane-bound lytic murein transglycosylase F from Methylobacillus flagellatus (strain ATCC 51484 / DSM 6875 / VKM B-1610 / KT).